The sequence spans 329 residues: Sex comb on midleg-like protein 1 (329 aa).

2 positions are modified to phosphoserine: Ser-138 and Ser-238. Residues 258-325 (WSVEAVVLFL…YYIDRLKQGK (68 aa)) form the SAM domain.

The protein belongs to the SCM family.

The protein localises to the nucleus. In terms of biological role, putative Polycomb group (PcG) protein. PcG proteins act by forming multiprotein complexes, which are required to maintain the transcriptionally repressive state of homeotic genes throughout development. May be involved in spermatogenesis during sexual maturation. This Nomascus leucogenys (Northern white-cheeked gibbon) protein is Sex comb on midleg-like protein 1 (SCML1).